The chain runs to 461 residues: Vitamin K-dependent protein C (461 aa).

The N-terminal stretch at 1-18 (MWQLTSLLLFVATWGISG) is a signal peptide. Thr-19 carries an O-linked (GalNAc...) threonine glycan. The propeptide occupies 19-42 (TPAPLDSVFSSSERAHQVLRIRKR). Residues 43–88 (ANSFLEELRHSSLERECIEEICDFEEAKEIFQNVDDTLAFWSKHVD) form the Gla domain. A 4-carboxyglutamate mark is found at Glu-48, Glu-49, Glu-56, Glu-58, Glu-61, Glu-62, Glu-67, Glu-68, and Glu-71. An intrachain disulfide couples Cys-59 to Cys-64. 4 disulfides stabilise this stretch: Cys-92/Cys-111, Cys-101/Cys-106, Cys-105/Cys-120, and Cys-122/Cys-131. 2 consecutive EGF-like domains span residues 97 to 132 (LEHP…RFCQ) and 136 to 176 (SFLN…LQCH). Asp-113 is subject to (3R)-3-hydroxyaspartate. Asn-139 carries an N-linked (GlcNAc...) asparagine glycan. 5 disulfide bridges follow: Cys-140/Cys-151, Cys-147/Cys-160, Cys-162/Cys-175, Cys-183/Cys-319, and Cys-238/Cys-254. The region spanning 212–450 (LIDGKMTRRG…YLDWIHGHIR (239 aa)) is the Peptidase S1 domain. His-253 (charge relay system) is an active-site residue. N-linked (GlcNAc...) asparagine glycosylation occurs at Asn-290. Asp-299 functions as the Charge relay system in the catalytic mechanism. Residue Ser-347 is modified to Phosphoserine; by FAM20C. N-linked (GlcNAc...) asparagine glycosylation occurs at Asn-355. Asn-371 carries an N-linked (GlcNAc...) asparagine; atypical; partial glycan. Cystine bridges form between Cys-373–Cys-387 and Cys-398–Cys-426. Ser-402 (charge relay system) is an active-site residue.

Belongs to the peptidase S1 family. Synthesized as a single chain precursor, which is cleaved into a light chain and a heavy chain held together by a disulfide bond. The enzyme is then activated by thrombin, which cleaves a tetradecapeptide from the amino end of the heavy chain; this reaction, which occurs at the surface of endothelial cells, is strongly promoted by thrombomodulin. Interacts (activated) with iripin-8, a serine protease inhibitor from Ixodes ricinus saliva. In terms of processing, the vitamin K-dependent, enzymatic carboxylation of some Glu residues allows the modified protein to bind calcium. N- and O-glycosylated. Partial (70%) N-glycosylation of Asn-371 with an atypical N-X-C site produces a higher molecular weight form referred to as alpha. The lower molecular weight form, not N-glycosylated at Asn-371, is beta. O-glycosylated with core 1 or possibly core 8 glycans. Post-translationally, the iron and 2-oxoglutarate dependent 3-hydroxylation of aspartate and asparagine is (R) stereospecific within EGF domains. In terms of processing, may be phosphorylated on a Ser or Thr in a region (AA 25-30) of the propeptide. In terms of tissue distribution, plasma; synthesized in the liver.

Its subcellular location is the secreted. The protein resides in the golgi apparatus. It is found in the endoplasmic reticulum. The catalysed reaction is Degradation of blood coagulation factors Va and VIIIa.. In terms of biological role, protein C is a vitamin K-dependent serine protease that regulates blood coagulation by inactivating factors Va and VIIIa in the presence of calcium ions and phospholipids. Exerts a protective effect on the endothelial cell barrier function. The polypeptide is Vitamin K-dependent protein C (PROC) (Homo sapiens (Human)).